We begin with the raw amino-acid sequence, 353 residues long: Methionine import ATP-binding protein MetN (353 aa).

In terms of domain architecture, ABC transporter spans Leu-7–Val-249. Position 41–48 (Gly-41–Ser-48) interacts with ATP.

Belongs to the ABC transporter superfamily. Methionine importer (TC 3.A.1.24) family. In terms of assembly, the complex is composed of two ATP-binding proteins (MetN), two transmembrane proteins (MetI) and a solute-binding protein (MetQ).

It localises to the cell membrane. The catalysed reaction is L-methionine(out) + ATP + H2O = L-methionine(in) + ADP + phosphate + H(+). The enzyme catalyses D-methionine(out) + ATP + H2O = D-methionine(in) + ADP + phosphate + H(+). Part of the ABC transporter complex MetNIQ involved in methionine import. Responsible for energy coupling to the transport system. This is Methionine import ATP-binding protein MetN from Ligilactobacillus salivarius (strain UCC118) (Lactobacillus salivarius).